The chain runs to 1051 residues: Kinesin-like protein KIN-4B (1051 aa).

Positions 1–21 are disordered; it reads MESHSSLSSSSSSSPPSSLSS. The 356-residue stretch at 25 to 380 folds into the Kinesin motor domain; the sequence is CVKVAVNVRP…LKYANRARNI (356 aa). 104–111 serves as a coordination point for ATP; that stretch reads GQTGSGKT. 2 coiled-coil regions span residues 414 to 448 and 540 to 644; these read ATSSEEVQVMREKIMKLESANEELSRELHIYRSKR and RQHF…KMKQ. Positions 916–925 are enriched in low complexity; it reads SSSYSGSSRS. 2 disordered regions span residues 916–946 and 1029–1051; these read SSSYSGSSRSSSKHYGDNNASDDPSSPSSTY and MSKSHHDDEDDHSWNRHSMFQGA.

Belongs to the TRAFAC class myosin-kinesin ATPase superfamily. Kinesin family. KIN-4 subfamily. In terms of assembly, homodimer.

Its function is as follows. Kinesin-like motor protein involved in the control of the oriented deposition of cellulose microfibrils. This chain is Kinesin-like protein KIN-4B, found in Arabidopsis thaliana (Mouse-ear cress).